The sequence spans 612 residues: Elongation factor 4 (612 aa).

Residues 12–194 (SRIRNFSIIA…QIVEKVPAPA (183 aa)) form the tr-type G domain. Residues 24–29 (DHGKST) and 141–144 (NKID) contribute to the GTP site.

It belongs to the TRAFAC class translation factor GTPase superfamily. Classic translation factor GTPase family. LepA subfamily.

It is found in the cell membrane. The catalysed reaction is GTP + H2O = GDP + phosphate + H(+). Functionally, required for accurate and efficient protein synthesis under certain stress conditions. May act as a fidelity factor of the translation reaction, by catalyzing a one-codon backward translocation of tRNAs on improperly translocated ribosomes. Back-translocation proceeds from a post-translocation (POST) complex to a pre-translocation (PRE) complex, thus giving elongation factor G a second chance to translocate the tRNAs correctly. Binds to ribosomes in a GTP-dependent manner. This chain is Elongation factor 4, found in Bacillus pumilus (strain SAFR-032).